We begin with the raw amino-acid sequence, 314 residues long: Lipoyl synthase (314 aa).

[4Fe-4S] cluster-binding residues include C61, C66, C72, C87, C91, C94, and S301. Positions 73–290 (FGRGTATFMI…EEEAKKMGFS (218 aa)) constitute a Radical SAM core domain.

It belongs to the radical SAM superfamily. Lipoyl synthase family. It depends on [4Fe-4S] cluster as a cofactor.

The protein localises to the cytoplasm. The catalysed reaction is [[Fe-S] cluster scaffold protein carrying a second [4Fe-4S](2+) cluster] + N(6)-octanoyl-L-lysyl-[protein] + 2 oxidized [2Fe-2S]-[ferredoxin] + 2 S-adenosyl-L-methionine + 4 H(+) = [[Fe-S] cluster scaffold protein] + N(6)-[(R)-dihydrolipoyl]-L-lysyl-[protein] + 4 Fe(3+) + 2 hydrogen sulfide + 2 5'-deoxyadenosine + 2 L-methionine + 2 reduced [2Fe-2S]-[ferredoxin]. It participates in protein modification; protein lipoylation via endogenous pathway; protein N(6)-(lipoyl)lysine from octanoyl-[acyl-carrier-protein]: step 2/2. In terms of biological role, catalyzes the radical-mediated insertion of two sulfur atoms into the C-6 and C-8 positions of the octanoyl moiety bound to the lipoyl domains of lipoate-dependent enzymes, thereby converting the octanoylated domains into lipoylated derivatives. The protein is Lipoyl synthase of Dechloromonas aromatica (strain RCB).